Here is a 194-residue protein sequence, read N- to C-terminus: Mitochondrial import inner membrane translocase subunit Tim22 (194 aa).

2 disulfides stabilise this stretch: Cys-69–Cys-141 and Cys-160–Cys-179. The next 3 membrane-spanning stretches (helical) occupy residues 74 to 94 (VLAC…TAGI), 123 to 143 (MSYA…ECLV), and 170 to 190 (AGVK…AAID).

It belongs to the Tim17/Tim22/Tim23 family. As to quaternary structure, component of the TIM22 complex, whose core is composed of TIMM22, associated with peripheral protein FXC1/TIMM10B and the 70 kDa heterohexamer. In most cases, the 70 kDa complex is composed of TIMM9 and TIMM10 (TIMM10A or TIMM10B). A small fraction of the 70 kDa complex is composed of TIMM8 (TIMM8A/DDP1 or TIMM8B/DDP2) and TIMM13. The TIM22 complex also contains AGK and TIMM29. Interacts directly with TIMM9, TIMM10A and FXC1/TIMM10B. Interacts (when oxidized) with TIMM29; interaction is direct. In terms of processing, disulfide bonds promote efficient assembly of the TIM22 complex.

It is found in the mitochondrion inner membrane. In terms of biological role, essential core component of the TIM22 complex, a complex that mediates the import and insertion of multi-pass transmembrane proteins into the mitochondrial inner membrane. In the TIM22 complex, it constitutes the voltage-activated and signal-gated channel. Forms a twin-pore translocase that uses the membrane potential as external driving force in 2 voltage-dependent steps. The polypeptide is Mitochondrial import inner membrane translocase subunit Tim22 (Timm22) (Mus musculus (Mouse)).